The sequence spans 414 residues: Adenylosuccinate synthetase (414 aa).

Residues 12 to 18 and 40 to 42 contribute to the GTP site; these read GDEGKGK and GHT. Residue aspartate 13 is the Proton acceptor of the active site. Residues aspartate 13 and glycine 40 each coordinate Mg(2+). IMP contacts are provided by residues 13–16, 38–41, threonine 124, arginine 138, glutamine 216, threonine 231, and arginine 297; these read DEGK and NAGH. The Proton donor role is filled by histidine 41. 293-299 lines the substrate pocket; the sequence is STTGRPR. GTP-binding positions include arginine 299, 325–327, and 403–405; these read KLD and STG.

This sequence belongs to the adenylosuccinate synthetase family. Homodimer. Mg(2+) is required as a cofactor.

The protein localises to the cytoplasm. It catalyses the reaction IMP + L-aspartate + GTP = N(6)-(1,2-dicarboxyethyl)-AMP + GDP + phosphate + 2 H(+). It functions in the pathway purine metabolism; AMP biosynthesis via de novo pathway; AMP from IMP: step 1/2. Its function is as follows. Plays an important role in the de novo pathway of purine nucleotide biosynthesis. Catalyzes the first committed step in the biosynthesis of AMP from IMP. The polypeptide is Adenylosuccinate synthetase (Hydrogenobaculum sp. (strain Y04AAS1)).